The primary structure comprises 300 residues: GPKCPFNSDTVSIIIETRENRNRDLYTLQTLQNHPEFKKKTITRPVVFITHGFTSSASEKNFINLAKALVDKDNYMVISIDWQTAACTNEYPGLKYAYYPTAASNTRLVGQYIATITQKLVKDYKISMANIRLIGHSLGAHVSGFAGKRVQELKLGKYSEIIGLDPARPSFDSNHCSERLCETDAEYVQIIHTSNYLGTEKILGTVDFYMNNGKNNPGCGRFFSEVCSHTRAVIYMAECIKHECCLIGIPRSKSSQPISRCTKQECVCVGLNAKKYPSRGSFYVPVESTAPFCNNKGKII.

An intrachain disulfide couples Cys-4 to Cys-87. Ser-137 acts as the Nucleophile in catalysis. The Charge relay system role is filled by Asp-165. Intrachain disulfides connect Cys-176–Cys-181 and Cys-219–Cys-227. The active-site Charge relay system is the His-229. Cystine bridges form between Cys-244-Cys-268, Cys-245-Cys-293, and Cys-261-Cys-266.

Belongs to the AB hydrolase superfamily. Lipase family. In terms of tissue distribution, expressed by the venom gland.

The protein resides in the secreted. The catalysed reaction is a 1,2-diacyl-sn-glycero-3-phosphocholine + H2O = a 2-acyl-sn-glycero-3-phosphocholine + a fatty acid + H(+). Its function is as follows. Catalyzes the hydrolysis of phosphatidylcholine with phospholipase A1 activity. May act as an allergen and induce hemolytic activity. The sequence is that of Phospholipase A1 from Vespula maculifrons (Eastern yellow jacket).